Here is a 320-residue protein sequence, read N- to C-terminus: tRNA dimethylallyltransferase (320 aa).

16-23 (GPTASGKT) serves as a coordination point for ATP. 18-23 (TASGKT) contributes to the substrate binding site. 3 interaction with substrate tRNA regions span residues 41 to 44 (DSAL), 165 to 169 (QRIQR), and 247 to 252 (RCVGYR).

Belongs to the IPP transferase family. In terms of assembly, monomer. Mg(2+) is required as a cofactor.

The catalysed reaction is adenosine(37) in tRNA + dimethylallyl diphosphate = N(6)-dimethylallyladenosine(37) in tRNA + diphosphate. In terms of biological role, catalyzes the transfer of a dimethylallyl group onto the adenine at position 37 in tRNAs that read codons beginning with uridine, leading to the formation of N6-(dimethylallyl)adenosine (i(6)A). This Azoarcus sp. (strain BH72) protein is tRNA dimethylallyltransferase.